Reading from the N-terminus, the 923-residue chain is Isoleucine--tRNA ligase (923 aa).

Positions 57-67 (PYANGHIHIGH) match the 'HIGH' region motif. Residue glutamate 560 participates in L-isoleucyl-5'-AMP binding. The 'KMSKS' region motif lies at 601 to 605 (KMSKS). Residue lysine 604 coordinates ATP. Residues cysteine 895, cysteine 898, cysteine 915, and cysteine 918 each coordinate Zn(2+).

It belongs to the class-I aminoacyl-tRNA synthetase family. IleS type 1 subfamily. As to quaternary structure, monomer. It depends on Zn(2+) as a cofactor.

The protein localises to the cytoplasm. It carries out the reaction tRNA(Ile) + L-isoleucine + ATP = L-isoleucyl-tRNA(Ile) + AMP + diphosphate. Catalyzes the attachment of isoleucine to tRNA(Ile). As IleRS can inadvertently accommodate and process structurally similar amino acids such as valine, to avoid such errors it has two additional distinct tRNA(Ile)-dependent editing activities. One activity is designated as 'pretransfer' editing and involves the hydrolysis of activated Val-AMP. The other activity is designated 'posttransfer' editing and involves deacylation of mischarged Val-tRNA(Ile). The sequence is that of Isoleucine--tRNA ligase from Geobacter sulfurreducens (strain ATCC 51573 / DSM 12127 / PCA).